An 822-amino-acid chain; its full sequence is BDNF/NT-3 growth factors receptor (822 aa).

The N-terminal stretch at 1–31 is a signal peptide; sequence MSSWIRWHGPAMARLWGFCWLVVGFWRAAFA. Cystine bridges form between Cys-32-Cys-38 and Cys-36-Cys-45. Residues 32–61 enclose the LRRNT domain; that stretch reads CPTSCKCSASRIWCSDPSPGIVAFPRLEPN. Topologically, residues 32–430 are extracellular; it reads CPTSCKCSAS…DVTDKTGREH (399 aa). N-linked (GlcNAc...) asparagine glycans are attached at residues Asn-67, Asn-95, and Asn-121. LRR repeat units follow at residues 92-113 and 116-137; these read GLRN…AFLK and NLQH…HFRH. An LRRCT domain is found at 148 to 196; that stretch reads NPFTCSCDIMWIKTLQEAKSSPDTQDLYCLNESSKNIPLANLQIPNCGL. Intrachain disulfides connect Cys-152–Cys-176 and Cys-154–Cys-194. N-linked (GlcNAc...) asparagine glycans are attached at residues Asn-178, Asn-205, Asn-241, Asn-254, Asn-280, Asn-325, Asn-338, and Asn-412. Ig-like C2-type domains are found at residues 197-282 and 295-365; these read PSAN…VNLT and PTSD…IAKN. An intrachain disulfide couples Cys-218 to Cys-266. A disulfide bridge connects residues Cys-302 and Cys-345. The chain crosses the membrane as a helical span at residues 431–454; the sequence is LSVYAVVVIASVVGFCLLVMLFLL. The segment at 455-466 is interaction with MAPK8IP3/JIP3; the sequence is KLARHSKFGMKG. The Cytoplasmic segment spans residues 455–822; it reads KLARHSKFGM…ASPVYLDILG (368 aa). The interval 475 to 498 is disordered; it reads DDSASPLHHISNGSNTPSSSEGGP. Residues 485-495 are compositionally biased toward polar residues; that stretch reads SNGSNTPSSSE. Tyr-516 carries the phosphotyrosine; by autocatalysis modification. The region spanning 538–807 is the Protein kinase domain; the sequence is IVLKRELGEG…KNIKGIHTLL (270 aa). ATP contacts are provided by residues 544 to 552 and Lys-572; that span reads LGEGAFGKV. Catalysis depends on Asp-676, which acts as the Proton acceptor. Residues Tyr-702, Tyr-706, Tyr-707, and Tyr-817 each carry the phosphotyrosine; by autocatalysis modification.

The protein belongs to the protein kinase superfamily. Tyr protein kinase family. Insulin receptor subfamily. In terms of assembly, exists in a dynamic equilibrium between monomeric (low affinity) and dimeric (high affinity) structures. Interacts (phosphorylated upon activation by BDNF) with SHC1; mediates SHC1 phosphorylation and activation. Interacts (phosphorylated upon activation by BDNF) with PLCG1 and/or PLCG2; mediates PLCG1 phosphorylation and activation. Interacts with SH2B1 and SH2B2. Interacts with NGFR; may regulate the ligand specificity of the receptor. Interacts with SORCS2; this interaction is important for normal targeting to post-synaptic densities in response to high-frequency stimulation. Interacts (phosphorylated upon ligand-binding) with SH2D1A; regulates NTRK2. Interacts with SQSTM1 and KIDINS220. Interacts (phosphorylated upon ligand-binding) with FRS2; activates the MAPK signaling pathway. Interacts with APPL1. Interacts with MAPK8IP3/JIP3 and KLC1; interaction with KLC1 is mediated by MAPK8IP3/JIP3. Interacts with SORL1; this interaction facilitates NTRK2 trafficking between synaptic plasma membranes, postsynaptic densities and cell soma, hence positively regulates BDNF signaling. Interacts with SLITRK2. In terms of processing, phosphorylated. Undergoes ligand-mediated autophosphorylation that is required for interaction with SHC1 and PLCG1 and other downstream effectors. Isoform TrkB-T-Shc is not phosphorylated. Ubiquitinated. Undergoes polyubiquitination upon activation; regulated by NGFR. Ubiquitination regulates the internalization of the receptor. In terms of tissue distribution, isoform TrkB is expressed in the central and peripheral nervous system. In the central nervous system (CNS), expression is observed in the cerebral cortex, hippocampus, thalamus, choroid plexus, granular layer of the cerebellum, brain stem, and spinal cord. In the peripheral nervous system, it is expressed in many cranial ganglia, the ophthalmic nerve, the vestibular system, multiple facial structures, the submaxillary glands, and dorsal root ganglia. Isoform TrkB-T1 is mainly expressed in the brain but also detected in other tissues including pancreas, kidney and heart. Isoform TrkB-T-Shc is predominantly expressed in the brain.

The protein resides in the cell membrane. It is found in the endosome membrane. The protein localises to the early endosome membrane. It localises to the cell projection. Its subcellular location is the axon. The protein resides in the dendrite. It is found in the cytoplasm. The protein localises to the perinuclear region. It localises to the postsynaptic density. It catalyses the reaction L-tyrosyl-[protein] + ATP = O-phospho-L-tyrosyl-[protein] + ADP + H(+). The neuronal activity and the influx of calcium positively regulate the kinase activity and the internalization of the receptor which are both important for active signaling. Regulated by NGFR that may control the internalization of the receptor. NGFR may also stimulate the activation by BDNF compared to NTF3 and NTF4. SH2D1A inhibits the autophosphorylation of the receptor, and alters the recruitment and activation of downstream effectors and signaling cascades. The formation of active receptors dimers able to fully transduce the ligand-mediated signal, may be negatively regulated by the formation of inactive heterodimers with the non-catalytic isoforms. Receptor tyrosine kinase involved in the development and the maturation of the central and the peripheral nervous systems through regulation of neuron survival, proliferation, migration, differentiation, and synapse formation and plasticity. Receptor for BDNF/brain-derived neurotrophic factor and NTF4/neurotrophin-4. Alternatively can also bind NTF3/neurotrophin-3 which is less efficient in activating the receptor but regulates neuron survival through NTRK2. Upon ligand-binding, undergoes homodimerization, autophosphorylation and activation. Recruits, phosphorylates and/or activates several downstream effectors including SHC1, FRS2, SH2B1, SH2B2 and PLCG1 that regulate distinct overlapping signaling cascades. Through SHC1, FRS2, SH2B1, SH2B2 activates the GRB2-Ras-MAPK cascade that regulates for instance neuronal differentiation including neurite outgrowth. Through the same effectors controls the Ras-PI3 kinase-AKT1 signaling cascade that mainly regulates growth and survival. Through PLCG1 and the downstream protein kinase C-regulated pathways controls synaptic plasticity. Thereby, plays a role in learning and memory by regulating both short term synaptic function and long-term potentiation. PLCG1 also leads to NF-Kappa-B activation and the transcription of genes involved in cell survival. Hence, it is able to suppress anoikis, the apoptosis resulting from loss of cell-matrix interactions. May also play a role in neutrophin-dependent calcium signaling in glial cells and mediate communication between neurons and glia. This chain is BDNF/NT-3 growth factors receptor (NTRK2), found in Homo sapiens (Human).